The sequence spans 311 residues: Methionyl-tRNA formyltransferase (311 aa).

110–113 contacts (6S)-5,6,7,8-tetrahydrofolate; it reads SLLP.

This sequence belongs to the Fmt family.

It carries out the reaction L-methionyl-tRNA(fMet) + (6R)-10-formyltetrahydrofolate = N-formyl-L-methionyl-tRNA(fMet) + (6S)-5,6,7,8-tetrahydrofolate + H(+). In terms of biological role, attaches a formyl group to the free amino group of methionyl-tRNA(fMet). The formyl group appears to play a dual role in the initiator identity of N-formylmethionyl-tRNA by promoting its recognition by IF2 and preventing the misappropriation of this tRNA by the elongation apparatus. The polypeptide is Methionyl-tRNA formyltransferase (Streptococcus pyogenes serotype M49 (strain NZ131)).